We begin with the raw amino-acid sequence, 58 residues long: Potassium channel toxin Ts16 (58 aa).

The N-terminal stretch at 1-16 is a signal peptide; sequence MHSSVFILILFSLAVI. 3 cysteine pairs are disulfide-bonded: C29-C51, C34-C47, and C38-C53.

As to expression, expressed by the venom gland.

The protein resides in the secreted. In terms of biological role, blocks potassium channels. The protein is Potassium channel toxin Ts16 of Tityus serrulatus (Brazilian scorpion).